Consider the following 346-residue polypeptide: Phosphoribosylformylglycinamidine cyclo-ligase (346 aa).

It belongs to the AIR synthase family.

Its subcellular location is the cytoplasm. It catalyses the reaction 2-formamido-N(1)-(5-O-phospho-beta-D-ribosyl)acetamidine + ATP = 5-amino-1-(5-phospho-beta-D-ribosyl)imidazole + ADP + phosphate + H(+). Its pathway is purine metabolism; IMP biosynthesis via de novo pathway; 5-amino-1-(5-phospho-D-ribosyl)imidazole from N(2)-formyl-N(1)-(5-phospho-D-ribosyl)glycinamide: step 2/2. In Colwellia psychrerythraea (strain 34H / ATCC BAA-681) (Vibrio psychroerythus), this protein is Phosphoribosylformylglycinamidine cyclo-ligase.